The following is a 363-amino-acid chain: Membrane-bound lytic murein transglycosylase C (363 aa).

The signal sequence occupies residues 1–15; that stretch reads MKKYIVFAIIPFLFA. Cysteine 16 carries N-palmitoyl cysteine lipidation. Cysteine 16 carries the S-diacylglycerol cysteine lipid modification.

The protein belongs to the transglycosylase Slt family.

The protein localises to the cell outer membrane. It carries out the reaction Exolytic cleavage of the (1-&gt;4)-beta-glycosidic linkage between N-acetylmuramic acid (MurNAc) and N-acetylglucosamine (GlcNAc) residues in peptidoglycan, from either the reducing or the non-reducing ends of the peptidoglycan chains, with concomitant formation of a 1,6-anhydrobond in the MurNAc residue.. Its function is as follows. Murein-degrading enzyme. May play a role in recycling of muropeptides during cell elongation and/or cell division. The polypeptide is Membrane-bound lytic murein transglycosylase C (Histophilus somni (strain 129Pt) (Haemophilus somnus)).